The primary structure comprises 340 residues: Ribonucleoside-diphosphate reductase subunit beta (340 aa).

2 residues coordinate Fe cation: aspartate 88 and histidine 122. Tyrosine 126 is an active-site residue. Fe cation is bound at residue histidine 216.

The protein belongs to the ribonucleoside diphosphate reductase small chain family. As to quaternary structure, tetramer of two alpha and two beta subunits. Fe cation serves as cofactor.

The enzyme catalyses a 2'-deoxyribonucleoside 5'-diphosphate + [thioredoxin]-disulfide + H2O = a ribonucleoside 5'-diphosphate + [thioredoxin]-dithiol. Its function is as follows. Provides the precursors necessary for DNA synthesis. Catalyzes the biosynthesis of deoxyribonucleotides from the corresponding ribonucleotides. The protein is Ribonucleoside-diphosphate reductase subunit beta (nrdF) of Mycoplasma genitalium (strain ATCC 33530 / DSM 19775 / NCTC 10195 / G37) (Mycoplasmoides genitalium).